The chain runs to 68 residues: Molybdenum-pterin-binding protein 1 (68 aa).

Positions S2 to A68 constitute a Mop domain.

Its function is as follows. Binds one mole of molybdenum per mole of protein and contains a pterin. This chain is Molybdenum-pterin-binding protein 1 (mopI), found in Clostridium pasteurianum.